The following is a 392-amino-acid chain: GTPase Obg (392 aa).

Residues 1–159 (MKFVDEAEIR…RNLKLELMLL (159 aa)) form the Obg domain. The interval 121-146 (GFHGLGNTRFKSSTNRAPRQKTNGTP) is disordered. The segment covering 129 to 145 (RFKSSTNRAPRQKTNGT) has biased composition (polar residues). Positions 160–333 (ADVGLLGMPN…LCNDVMDFIE (174 aa)) constitute an OBG-type G domain. GTP is bound by residues 166–173 (GMPNAGKS), 191–195 (FTTLV), 213–216 (DIPG), 283–286 (NKVD), and 314–316 (SAF). Mg(2+)-binding residues include S173 and T193.

Belongs to the TRAFAC class OBG-HflX-like GTPase superfamily. OBG GTPase family. As to quaternary structure, monomer. Mg(2+) is required as a cofactor.

The protein localises to the cytoplasm. Its function is as follows. An essential GTPase which binds GTP, GDP and possibly (p)ppGpp with moderate affinity, with high nucleotide exchange rates and a fairly low GTP hydrolysis rate. Plays a role in control of the cell cycle, stress response, ribosome biogenesis and in those bacteria that undergo differentiation, in morphogenesis control. The sequence is that of GTPase Obg from Alteromonas mediterranea (strain DSM 17117 / CIP 110805 / LMG 28347 / Deep ecotype).